Reading from the N-terminus, the 374-residue chain is N-acetyldiaminopimelate deacetylase (374 aa).

Asp-69 is a catalytic residue. The active-site Proton acceptor is Glu-128.

This sequence belongs to the peptidase M20A family. N-acetyldiaminopimelate deacetylase subfamily.

It catalyses the reaction N-acetyl-(2S,6S)-2,6-diaminopimelate + H2O = (2S,6S)-2,6-diaminopimelate + acetate. It functions in the pathway amino-acid biosynthesis; L-lysine biosynthesis via DAP pathway; LL-2,6-diaminopimelate from (S)-tetrahydrodipicolinate (acetylase route): step 3/3. Functionally, catalyzes the conversion of N-acetyl-diaminopimelate to diaminopimelate and acetate. The sequence is that of N-acetyldiaminopimelate deacetylase (ykuR) from Bacillus subtilis (strain 168).